The chain runs to 768 residues: Gephyrin (768 aa).

The MPT Mo-transferase stretch occupies residues 14–166 (QIRVGVLTVS…LPGSKKGSQE (153 aa)). Residues 153–348 (LIINLPGSKK…VDITKVARRH (196 aa)) are interaction with GABARAP. Disordered regions lie at residues 194–245 (DELE…DSSS) and 273–316 (TASL…ASRV). Over residues 200 to 212 (PSPPPPLSPPPTT) the composition is skewed to pro residues. Phosphoserine occurs at positions 201 and 207. T211 carries the phosphothreonine modification. Residue S213 is modified to Phosphoserine. Residue C225 is the site of S-palmitoyl cysteine attachment. The span at 274–299 (ASLSTTPSESPRAQATSRLSTASCPT) shows a compositional bias: polar residues. A Phosphoserine modification is found at S275. Phosphothreonine occurs at positions 278 and 279. Phosphoserine is present on residues S281 and S283. C297 carries S-palmitoyl cysteine lipidation. The MPT adenylyltransferase stretch occupies residues 326-768 (SSKENILRAS…VVDVMVIGRL (443 aa)). Residue S337 is modified to Phosphoserine.

In the N-terminal section; belongs to the MoaB/Mog family. The protein in the C-terminal section; belongs to the MoeA family. Homotrimer, homodimer and homooligomer. Interacts with SRGAP2 (via SH3 domain). Interacts with GLRB. Interacts with GABARAP. Interacts with GABRA3. GABRA3 and GLRB occupy overlapping binding sites. Interacts with ARHGAP32; IQSEC3, INSYN1 and INSYN2A. The cofactor is Mg(2+). In terms of processing, phosphorylated. Palmitoylated. Palmitoylation is stimulated by GABA type A receptors activity. Palmitoylation by ZDHHC12 regulates clustering at synapses. Expressed in tissues including spinal cord, brain, liver, kidney and lung.

It localises to the postsynaptic cell membrane. Its subcellular location is the cell membrane. It is found in the cytoplasm. The protein resides in the cytosol. The protein localises to the cytoskeleton. It localises to the cell projection. Its subcellular location is the dendrite. It is found in the postsynaptic density. It catalyses the reaction molybdopterin + ATP + H(+) = adenylyl-molybdopterin + diphosphate. The enzyme catalyses adenylyl-molybdopterin + molybdate = Mo-molybdopterin + AMP + H(+). The protein operates within cofactor biosynthesis; molybdopterin biosynthesis. Inhibited by copper and tungsten. Microtubule-associated protein involved in membrane protein-cytoskeleton interactions. It is thought to anchor the inhibitory glycine receptor (GLYR) to subsynaptic microtubules. Acts as a major instructive molecule at inhibitory synapses, where it also clusters GABA type A receptors. Its function is as follows. Also has a catalytic activity and catalyzes two steps in the biosynthesis of the molybdenum cofactor. In the first step, molybdopterin is adenylated. Subsequently, molybdate is inserted into adenylated molybdopterin and AMP is released. The chain is Gephyrin (Gphn) from Rattus norvegicus (Rat).